The primary structure comprises 832 residues: WD repeat-containing protein 75 (832 aa).

13 WD repeats span residues K4 to S43, E47 to D86, G90 to A134, K148 to R187, L196 to R233, K239 to Q278, D281 to E320, S326 to S364, Q378 to A425, S432 to C474, Y485 to S523, W527 to N567, and A572 to K609. Disordered stretches follow at residues Q704–G723 and V759–R811. A compositionally biased stretch (acidic residues) spans D764–A785. Basic and acidic residues predominate over residues D799–R811.

In terms of assembly, component of the proposed t-UTP subcomplex of the ribosomal small subunit (SSU) processome. SSU processome is composed of more than 70 proteins and the RNA chaperone small nucleolar RNA (snoRNA) U3.

The protein resides in the nucleus. The protein localises to the nucleolus. In terms of biological role, ribosome biogenesis factor. Part of the small subunit (SSU) processome, first precursor of the small eukaryotic ribosomal subunit. During the assembly of the SSU processome in the nucleolus, many ribosome biogenesis factors, an RNA chaperone and ribosomal proteins associate with the nascent pre-rRNA and work in concert to generate RNA folding, modifications, rearrangements and cleavage as well as targeted degradation of pre-ribosomal RNA by the RNA exosome. Involved in nucleolar processing of pre-18S ribosomal RNA. Required for optimal pre-ribosomal RNA transcription by RNA polymerase I. This chain is WD repeat-containing protein 75 (wdr75), found in Danio rerio (Zebrafish).